A 499-amino-acid chain; its full sequence is Probable cytosol aminopeptidase (499 aa).

Mn(2+) is bound by residues Lys-271 and Asp-276. Lys-283 is a catalytic residue. Asp-294, Asp-353, and Glu-355 together coordinate Mn(2+). Residue Arg-357 is part of the active site.

This sequence belongs to the peptidase M17 family. Requires Mn(2+) as cofactor.

Its subcellular location is the cytoplasm. The enzyme catalyses Release of an N-terminal amino acid, Xaa-|-Yaa-, in which Xaa is preferably Leu, but may be other amino acids including Pro although not Arg or Lys, and Yaa may be Pro. Amino acid amides and methyl esters are also readily hydrolyzed, but rates on arylamides are exceedingly low.. It carries out the reaction Release of an N-terminal amino acid, preferentially leucine, but not glutamic or aspartic acids.. Its function is as follows. Presumably involved in the processing and regular turnover of intracellular proteins. Catalyzes the removal of unsubstituted N-terminal amino acids from various peptides. The chain is Probable cytosol aminopeptidase from Bordetella parapertussis (strain 12822 / ATCC BAA-587 / NCTC 13253).